The primary structure comprises 1157 residues: MMKNNVDRIVSIVTALIMIFGASLFSPPIRVFADDTNINLVSNGDFESGTIDGWIKQGNPTLAVTTEQAIGQYSMKVTGRTQTYEGPAYSFLGKMQKGESYSVSLKVRLVSGQNSSNPLITVTMFREDDNGKHYDTIVWQKQVSEDSWTTVSGTYTLDYIGTLKTLYMYVESPDPTLEYYIDDVVVTTQNPIQVGNVIANETFENGNTSGWIGTGSSVVKAVYGVAHSGDYSLLTTGRTANWNGPSYDLTGKIVPGQQYNVDFWVKFVNGNDTEQIKATVKATSDKDNYIQVNDFANVNKGEWTEIKGSFTLPVADYSGISIYVESQNPTLEFYIDDFSVIGEISNNQITIQNDIPDLYSVFKDYFPIGVAVDPSRLNDADPHAQLTAKHFNMLVAENAMKPESLQPTEGNFTFDNADKIVDYAIAHNMKMRGHTLLWHNQVPDWFFQDPSDPSKSASRDLLLQRLKTHITTVLDHFKTKYGSQNPIIGWDVVNEVLDDNGNLRNSKWLQIIGPDYIEKAFEYAHEADPSMKLFINDYNIENNGVKTQAMYDLVKKLKSEGVPIDGIGMQMHININSNIDNIKASIEKLASLGVEIQVTELDMNMNGNISNEALLKQARLYKQLFDLFKAEKQYITAVVFWGVSDDVTWLSKPNAPLLFDSKLQAKPAFWAVVDPSKAIPDIQSAKALEGSPTIGANVDSSWKLVKPLYVNTYVEGTVGATATVKSMWDTKNLYLLVQVSDNTPSNNDGIEIFVDKNDDKSTSYETDDERYTIKRDGTGSSDITKYVTSNADGYVAQLAIPIEDISPAVNDKIGFDIRINDDKGNGKIDAITVWNDYTNSQNTNTSYFGDIVLSKSAQIATAIYGTPVIDGKVDDIWNNVEPISTNTWILGSNGATATQKMMWDDKYLYVLADVTDSNLNKSSINPYEQDSVEVFVDQNNDKTTYYENDDGQYRVNYDNEQSFGGSTNSNGFKSATSLTQSGYIVEEAIPWTSITPSNGTIIGFDLQVNNADENGKRTGIVTWCDPSGNSWQDTSGFGNLLLTGKPSGALKKGVTFDDIKNSWAKDAIEVLASRHIVEGMTDTQYEPNKTVTRAEFTAMILRLLNIKEEQYSGEFSDVNSGDWYANAIEAAYKAGIIEGDGKNARPNDSITREEMTQ.

Residues 1-33 (MMKNNVDRIVSIVTALIMIFGASLFSPPIRVFA) form the signal peptide. CBM-cenC domains follow at residues 38 to 189 (INLV…VTTQ) and 195 to 343 (GNVI…VIGE). Residues 352–675 (QNDIPDLYSV…KPAFWAVVDP (324 aa)) enclose the GH10 domain. Glu495 serves as the catalytic Proton donor. Residue Asp537 is part of the active site. Glu600 acts as the Nucleophile in catalysis. SLH domains are found at residues 1051–1114 (KKGV…YSGE) and 1115–1157 (FSDV…EMTQ).

Belongs to the glycosyl hydrolase 10 (cellulase F) family.

It carries out the reaction Endohydrolysis of (1-&gt;4)-beta-D-xylosidic linkages in xylans.. The protein operates within glycan degradation; xylan degradation. Functionally, endo-acting enzyme that randomly cleaves the internal xylosidic linkages of the xylan backbone, yielding xylooligosaccharides of various lengths which are further hydrolyzed to xylose molecules by beta-xylosidase (EC 3.2.1.37). Requires at least three xylose residues for catalytic activity. Does not have activity against xylobiose. The chain is Endo-1,4-beta-xylanase A (xynA) from Thermoanaerobacterium saccharolyticum.